The primary structure comprises 157 residues: Ribosome maturation factor RimP (157 aa).

It belongs to the RimP family.

The protein localises to the cytoplasm. Its function is as follows. Required for maturation of 30S ribosomal subunits. The protein is Ribosome maturation factor RimP of Lactococcus lactis subsp. lactis (strain IL1403) (Streptococcus lactis).